We begin with the raw amino-acid sequence, 186 residues long: Ribosome-recycling factor (186 aa).

This sequence belongs to the RRF family.

It is found in the cytoplasm. Its function is as follows. Responsible for the release of ribosomes from messenger RNA at the termination of protein biosynthesis. May increase the efficiency of translation by recycling ribosomes from one round of translation to another. The protein is Ribosome-recycling factor of Rickettsia conorii (strain ATCC VR-613 / Malish 7).